Here is a 157-residue protein sequence, read N- to C-terminus: uncharacterized protein (157 aa).

Residues 1–19 (MRKYLIILVLLLFLSSSFG) form the signal peptide.

This is an uncharacterized protein from Methanocaldococcus jannaschii (strain ATCC 43067 / DSM 2661 / JAL-1 / JCM 10045 / NBRC 100440) (Methanococcus jannaschii).